The sequence spans 84 residues: Small ribosomal subunit protein bS16 (84 aa).

Belongs to the bacterial ribosomal protein bS16 family.

The protein is Small ribosomal subunit protein bS16 of Methylococcus capsulatus (strain ATCC 33009 / NCIMB 11132 / Bath).